The primary structure comprises 277 residues: Release factor glutamine methyltransferase (277 aa).

Residues G120–G124, D143, W171, and N186 contribute to the S-adenosyl-L-methionine site. N186 to Y189 is a binding site for substrate.

The protein belongs to the protein N5-glutamine methyltransferase family. PrmC subfamily.

It carries out the reaction L-glutaminyl-[peptide chain release factor] + S-adenosyl-L-methionine = N(5)-methyl-L-glutaminyl-[peptide chain release factor] + S-adenosyl-L-homocysteine + H(+). Functionally, methylates the class 1 translation termination release factors RF1/PrfA and RF2/PrfB on the glutamine residue of the universally conserved GGQ motif. This is Release factor glutamine methyltransferase from Coxiella burnetii (strain RSA 493 / Nine Mile phase I).